The chain runs to 100 residues: Small ribosomal subunit protein uS14c (100 aa).

This sequence belongs to the universal ribosomal protein uS14 family. In terms of assembly, part of the 30S ribosomal subunit.

The protein resides in the plastid. It localises to the chloroplast. Binds 16S rRNA, required for the assembly of 30S particles. The polypeptide is Small ribosomal subunit protein uS14c (Huperzia lucidula (Shining clubmoss)).